Here is a 94-residue protein sequence, read N- to C-terminus: Large ribosomal subunit protein bL27 (94 aa).

A propeptide spanning residues 1 to 10 (MQFLFNIQLF) is cleaved from the precursor.

It belongs to the bacterial ribosomal protein bL27 family. The N-terminus is cleaved by ribosomal processing cysteine protease Prp.

The polypeptide is Large ribosomal subunit protein bL27 (Fusobacterium nucleatum subsp. nucleatum (strain ATCC 25586 / DSM 15643 / BCRC 10681 / CIP 101130 / JCM 8532 / KCTC 2640 / LMG 13131 / VPI 4355)).